The primary structure comprises 132 residues: L-ectoine synthase (132 aa).

Belongs to the ectoine synthase family.

The catalysed reaction is (2S)-4-acetamido-2-aminobutanoate = L-ectoine + H2O. The protein operates within amine and polyamine biosynthesis; ectoine biosynthesis; L-ectoine from L-aspartate 4-semialdehyde: step 3/3. Functionally, catalyzes the circularization of gamma-N-acetyl-alpha,gamma-diaminobutyric acid (ADABA) to ectoine (1,4,5,6-tetrahydro-2-methyl-4-pyrimidine carboxylic acid), which is an excellent osmoprotectant. The sequence is that of L-ectoine synthase from Rhodococcus jostii (strain RHA1).